Consider the following 394-residue polypeptide: Putative 8-amino-7-oxononanoate synthase (394 aa).

Residue R21 participates in substrate binding. Residue 107-108 participates in pyridoxal 5'-phosphate binding; that stretch reads GY. Position 132 (H132) interacts with substrate. Pyridoxal 5'-phosphate contacts are provided by residues S180, 205 to 208, and 236 to 239; these read DEAH and TLSK. The residue at position 239 (K239) is an N6-(pyridoxal phosphate)lysine. Substrate is bound at residue T361.

The protein belongs to the class-II pyridoxal-phosphate-dependent aminotransferase family. BioF subfamily. As to quaternary structure, homodimer. Requires pyridoxal 5'-phosphate as cofactor.

The enzyme catalyses 6-carboxyhexanoyl-[ACP] + L-alanine + H(+) = (8S)-8-amino-7-oxononanoate + holo-[ACP] + CO2. It participates in cofactor biosynthesis; biotin biosynthesis. Functionally, catalyzes the decarboxylative condensation of pimeloyl-[acyl-carrier protein] and L-alanine to produce 8-amino-7-oxononanoate (AON), [acyl-carrier protein], and carbon dioxide. The protein is Putative 8-amino-7-oxononanoate synthase (bioF) of Acaryochloris marina (strain MBIC 11017).